The sequence spans 400 residues: TBC1 domain family member 13 (400 aa).

One can recognise a Rab-GAP TBC domain in the interval 35–345 (PCEGGLRCLC…RIWDSLFADD (311 aa)).

In terms of assembly, interacts with RAB1A and RAB10; in a GTP-dependent manner.

It is found in the membrane. Its subcellular location is the cytoplasm. Its function is as follows. Acts as a GTPase-activating protein for RAB35. Together with RAB35 may be involved in regulation of insulin-induced glucose transporter SLC2A4/GLUT4 translocation to the plasma membrane in adipocytes. The polypeptide is TBC1 domain family member 13 (TBC1D13) (Homo sapiens (Human)).